Consider the following 186-residue polypeptide: MGDKLLDPTQIINGLAVMLSFFVGYRYALKRGDAKDSVTEGAATPFSQESSVSSGSEASVSDKGYGGLNDNFKMVLVVRNDLKMGKGKIAAQCGHGAVGAYQRAVVRTPRLLRSWENCGCAKIAVRVESEAELMAIKKEAERQQLNTCLIRDAGRTQIEANSKTVLAVGPAAAADIDRVTGHLKLL.

Belongs to the PTH2 family.

It catalyses the reaction an N-acyl-L-alpha-aminoacyl-tRNA + H2O = an N-acyl-L-amino acid + a tRNA + H(+). The natural substrate for this enzyme may be peptidyl-tRNAs which drop off the ribosome during protein synthesis. This is Probable peptidyl-tRNA hydrolase 2 from Drosophila melanogaster (Fruit fly).